Here is a 659-residue protein sequence, read N- to C-terminus: Cytochrome bo(3) ubiquinol oxidase subunit 1 (659 aa).

At 1–14 (MFGKLTLKAIPVDE) the chain is on the extracellular side. Residues 15–35 (PIIMVTYISIILIALFISFSI) form a helical membrane-spanning segment. The Cytoplasmic portion of the chain corresponds to 36 to 58 (TYFKKWKYLWYEWFTTVDHKKIS). The chain crosses the membrane as a helical span at residues 59-79 (IMYGILAFIMLFRGFVDAILM). The a ubiquinone site is built by Arg71, Asp75, and His98. Residues 80 to 106 (RTQQVIASSGNTGFLPPHHYDQIFTAH) are Extracellular-facing. A heme b-binding site is contributed by His106. A helical membrane pass occupies residues 107-127 (GVIMIFFVAMPLVIGLMNLVV). Topologically, residues 128–145 (PLQIGARDVAFPFLNNLS) are cytoplasmic. A helical membrane pass occupies residues 146 to 166 (FWLNVSGAILLTLSLGIGEFA). The Extracellular segment spans residues 167-189 (QTGWLAYPPLSEVKYSPGVGVDY). Trp170 lines the heme b pocket. The chain crosses the membrane as a helical span at residues 190 to 210 (WIWSLQISGVGTTLTGINFLI). At 211–225 (TILKMRAPGMCFFKM) the chain is on the cytoplasmic side. A helical membrane pass occupies residues 226–246 (PVFTWAALCTNILIVISFPVL). The Extracellular portion of the chain corresponds to 247-277 (TTTLLLLTLDRCFDFHFFTNNFGGNPMMYVN). Residues 278–298 (LIWIWGHPEVYILVLPVFGVF) form a helical membrane-spanning segment. His284 is a Cu(2+) binding site. Residues 284-288 (HPEVY) constitute a cross-link (1'-histidyl-3'-tyrosine (His-Tyr)). Tyr288 is a Fe(II)-heme o binding site. Residues 299–309 (SEVVATFSKKR) lie on the Cytoplasmic side of the membrane. The helical transmembrane segment at 310 to 330 (LFGYVSLVWATLAITILSFIV) threads the bilayer. The Extracellular portion of the chain corresponds to 331-347 (WLHHFFTMGAGSNVNAF). Residues His333 and His334 each contribute to the Cu(2+) site. A helical membrane pass occupies residues 348–368 (FGITTMIIAIPTGVKIFNWLF). Residues 369–380 (TMYQGRVHMHSS) are Cytoplasmic-facing. The helical transmembrane segment at 381 to 401 (MLWTIGFLITFSIGGMTGVLL) threads the bilayer. The Extracellular portion of the chain corresponds to 402 to 413 (SIPPADFILHNS). Fe(II)-heme o-binding residues include His411 and His419. Residues 414-434 (LFLVAHFHNVIIGGVVFGCFA) traverse the membrane as a helical segment. Residue His421 coordinates heme b. Residues 435-456 (GINYWFPKLFGFILNELWGKRA) are Cytoplasmic-facing. Residues 457-477 (FWFWIIGFFTAFMPLYFLGFM) form a helical membrane-spanning segment. At 478 to 490 (GMTRRLSQNIDIE) the chain is on the extracellular side. The heme b site is built by Arg481 and Arg482. Residues 491 to 511 (FHFLLSIAAIGAILIGIGILC) form a helical membrane-spanning segment. Topologically, residues 512 to 580 (QIIQFWVSVR…KNQVQKKQYS (69 aa)) are cytoplasmic. A helical transmembrane segment spans residues 581-601 (AIHMPKNTGLGIFISFFSLLF). At 602–605 (GFSA) the chain is on the extracellular side. The chain crosses the membrane as a helical span at residues 606–626 (VWNIIWLSFLSFLVVIISLIF). Over 627-659 (KSIDENTEYTVSVKEIESIENRHLENVQKAGLK) the chain is Cytoplasmic.

It belongs to the heme-copper respiratory oxidase family. In terms of assembly, the cytochrome bo(3) ubiquinol oxidase complex is a heterooctamer of two A chains, two B chains, two C chains and two D chains. Cu(2+) is required as a cofactor. Heme b serves as cofactor. Requires Fe(II)-heme o as cofactor.

The protein localises to the cell membrane. It catalyses the reaction 2 a ubiquinol + O2 + n H(+)(in) = 2 a ubiquinone + 2 H2O + n H(+)(out). Cytochrome bo(3) ubiquinol oxidase is the terminal enzyme in the aerobic respiratory chain. Catalyzes the four-electron reduction of O2 to water, using a ubiquinol as a membrane soluble electron donor for molecular oxygen reduction. Has proton pump activity across the membrane in addition to electron transfer, pumping 2 protons/electron and generating a proton motive force. All the redox centers of this enzyme complex are located within the largest subunit, subunit I. Protons are probably pumped via D- and K- channels found in this subunit. This Buchnera aphidicola subsp. Schizaphis graminum (strain Sg) protein is Cytochrome bo(3) ubiquinol oxidase subunit 1 (cyoB).